The primary structure comprises 450 residues: MAPPESSHHHLLESGLLEVSKAPSAAVAAEEEEKKEAAAWTPSSSSSMTGRKIKSEASPLLRRLLGGPAAQLQEVLLGTKLYPLFSAVPLAVAAESLRLGRVWVFAFSLIGLAPLAERVSFLSEHIANTVGPTAGGIMNATCGNVPELIIALFALHKNKMEILKWSLLGSILSNLLLVLGSSLLFGGIVNIGKERPLDKRQADVSIGLLLLGVLCHIATLVSKYTSSTGDSINSSSVMQLSRSCAIVMLIAYFGSLMFQLKTHRQIFELEEDSSDSSSSEDDATDKSVIGFASAMVWLIGMAVVTAMLSSYVVTTIEEASESMGIPVRFISIILLPIVGNAAEHAGAIIFAFKNKIDISLGITLGSATQISMLVVPVILIVSWVNAIPMDLDFNLLETGSLAMAVITTAFTLQDDKWHYLKGLNLVFSYIVIAVCFFVMKALPTLKKEDD.

The Cytoplasmic segment spans residues 1-73; sequence MAPPESSHHH…LLGGPAAQLQ (73 aa). Residues 28–52 are disordered; sequence AAEEEEKKEAAAWTPSSSSSMTGRK. A helical transmembrane segment spans residues 74–94; that stretch reads EVLLGTKLYPLFSAVPLAVAA. Residues 95–101 are Extracellular-facing; that stretch reads ESLRLGR. The helical transmembrane segment at 102–122 threads the bilayer; it reads VWVFAFSLIGLAPLAERVSFL. Over 123-134 the chain is Cytoplasmic; sequence SEHIANTVGPTA. Residues 135-155 form a helical membrane-spanning segment; it reads GGIMNATCGNVPELIIALFAL. A cation selection region spans residues 143 to 178; sequence GNVPELIIALFALHKNKMEILKWSLLGSILSNLLLV. Over 156–170 the chain is Extracellular; sequence HKNKMEILKWSLLGS. Residues 171–191 form a helical membrane-spanning segment; it reads ILSNLLLVLGSSLLFGGIVNI. At 192-201 the chain is on the cytoplasmic side; sequence GKERPLDKRQ. A helical transmembrane segment spans residues 202 to 222; the sequence is ADVSIGLLLLGVLCHIATLVS. At 223-239 the chain is on the extracellular side; it reads KYTSSTGDSINSSSVMQ. The helical transmembrane segment at 240–260 threads the bilayer; the sequence is LSRSCAIVMLIAYFGSLMFQL. The Cytoplasmic portion of the chain corresponds to 261-287; it reads KTHRQIFELEEDSSDSSSSEDDATDKS. The helical transmembrane segment at 288 to 308 threads the bilayer; sequence VIGFASAMVWLIGMAVVTAML. The Extracellular segment spans residues 309-331; the sequence is SSYVVTTIEEASESMGIPVRFIS. A helical transmembrane segment spans residues 332–352; it reads IILLPIVGNAAEHAGAIIFAF. Residues 339 to 374 are cation selection; sequence GNAAEHAGAIIFAFKNKIDISLGITLGSATQISMLV. The Cytoplasmic segment spans residues 353–360; that stretch reads KNKIDISL. A helical transmembrane segment spans residues 361 to 381; it reads GITLGSATQISMLVVPVILIV. Residues 382-385 lie on the Extracellular side of the membrane; sequence SWVN. The helical transmembrane segment at 386–406 threads the bilayer; that stretch reads AIPMDLDFNLLETGSLAMAVI. Residues 407–424 are Cytoplasmic-facing; that stretch reads TTAFTLQDDKWHYLKGLN. A helical transmembrane segment spans residues 425–445; it reads LVFSYIVIAVCFFVMKALPTL. At 446–450 the chain is on the extracellular side; the sequence is KKEDD.

This sequence belongs to the Ca(2+):cation antiporter (CaCA) (TC 2.A.19) family. Cation/proton exchanger (CAX) subfamily. In terms of tissue distribution, expressed in leaf blades.

It localises to the vacuole membrane. Its function is as follows. Vacuolar cation/proton exchanger (CAX). Translocates Ca(2+) and other metal ions into vacuoles using the proton gradient formed by H(+)-ATPase and H(+)-pyrophosphatase. In Oryza sativa subsp. japonica (Rice), this protein is Vacuolar cation/proton exchanger 1c (CAX1c).